A 104-amino-acid polypeptide reads, in one-letter code: Cysteine-rich and transmembrane domain-containing protein 1 (104 aa).

2 stretches are compositionally biased toward pro residues: residues 1 to 25 and 33 to 47; these read MNPENPPPYPGPGPTAPYPPYPQQP and GAPPPQGYPYPPPQG. The tract at residues 1-47 is disordered; it reads MNPENPPPYPGPGPTAPYPPYPQQPMGPMGPMGAPPPQGYPYPPPQG. The chain crosses the membrane as a helical span at residues 81–98; the sequence is LGPSTCLTACWTALCCCC.

This sequence belongs to the CYSTM1 family.

Its subcellular location is the membrane. This Mus musculus (Mouse) protein is Cysteine-rich and transmembrane domain-containing protein 1 (Cystm1).